We begin with the raw amino-acid sequence, 376 residues long: 23S rRNA (uracil(747)-C(5))-methyltransferase RlmC (376 aa).

[4Fe-4S] cluster is bound by residues cysteine 3, cysteine 11, cysteine 14, and cysteine 87. Positions 212, 241, 262, and 307 each coordinate S-adenosyl-L-methionine. Catalysis depends on cysteine 334, which acts as the Nucleophile.

This sequence belongs to the class I-like SAM-binding methyltransferase superfamily. RNA M5U methyltransferase family. RlmC subfamily.

The enzyme catalyses uridine(747) in 23S rRNA + S-adenosyl-L-methionine = 5-methyluridine(747) in 23S rRNA + S-adenosyl-L-homocysteine + H(+). Catalyzes the formation of 5-methyl-uridine at position 747 (m5U747) in 23S rRNA. The sequence is that of 23S rRNA (uracil(747)-C(5))-methyltransferase RlmC from Salmonella choleraesuis (strain SC-B67).